Here is a 220-residue protein sequence, read N- to C-terminus: Ribosomal RNA small subunit methyltransferase G 1 (220 aa).

The S-adenosyl-L-methionine site is built by G79, F84, and R150.

Belongs to the methyltransferase superfamily. RNA methyltransferase RsmG family.

The protein localises to the cytoplasm. The enzyme catalyses guanosine(527) in 16S rRNA + S-adenosyl-L-methionine = N(7)-methylguanosine(527) in 16S rRNA + S-adenosyl-L-homocysteine. Its function is as follows. Specifically methylates the N7 position of guanine in position 527 of 16S rRNA. This Syntrophobacter fumaroxidans (strain DSM 10017 / MPOB) protein is Ribosomal RNA small subunit methyltransferase G 1.